A 739-amino-acid chain; its full sequence is Putative apoptosis-inducing factor 1, mitochondrial (739 aa).

The transit peptide at 1–42 directs the protein to the mitochondrion; it reads MSIWGVRCLTQRFIRQAYILANRRLLGPVPQRSPPAYAPLRP. The segment at 257 to 564 is FAD-dependent oxidoreductase; that stretch reads YLIIGGGTAA…ARRNLYVAGD (308 aa). Residues 261 to 265, Arg295, Lys300, Val358, Arg410, Asp564, and 580 to 581 contribute to the FAD site; these read GGGTA and HH. Residues 644–681 are disordered; it reads VDQLSESSDSDVPETSTSSSQSSKSDAGASQDGVTCDP. Low complexity predominate over residues 656–676; that stretch reads PETSTSSSQSSKSDAGASQDG.

The protein belongs to the FAD-dependent oxidoreductase family. FAD is required as a cofactor.

Its subcellular location is the mitochondrion intermembrane space. The catalysed reaction is A + NADH + H(+) = AH2 + NAD(+). Probable NADH oxidoreductase. Mitochondrial effector of cell death that plays roles in developmentally regulated cell death and normal mitochondrial function. The chain is Putative apoptosis-inducing factor 1, mitochondrial (AIF) from Drosophila melanogaster (Fruit fly).